Reading from the N-terminus, the 318-residue chain is Protein IMPACT-A (318 aa).

One can recognise an RWD domain in the interval 14–116 (DEVEALTSIY…EKIREFLLGK (103 aa)). The disordered stretch occupies residues 296–318 (EESSKQTAKSKKVGKECKKKADH). The segment covering 308–318 (VGKECKKKADH) has biased composition (basic and acidic residues).

The protein belongs to the IMPACT family. As to quaternary structure, interacts with GCN1; prevents the interaction of GCN1 with EIF2AK4/GCN2 and inhibits EIF2AK4/GCN2 kinase activity. Interaction with RPL39; this interaction occurs in a GCN1-independent manner. Associates with ribosomes; this interaction occurs in a GCN1-independent manner. Associates with actin; this interaction occurs in a GCN1-independent manner.

It is found in the cytoplasm. Functionally, translational regulator that ensures constant high levels of translation upon a variety of stress conditions, such as amino acid starvation, UV-C irradiation, proteasome inhibitor treatment and glucose deprivation. Plays a role as a negative regulator of the EIF2AK4/GCN2 kinase activity; impairs GCN1-mediated EIF2AK4/GCN2 activation, and hence EIF2AK4/GCN2-mediated eIF-2-alpha phosphorylation and subsequent down-regulation of protein synthesis. Plays a role in differentiation of neuronal cells by stimulating neurite outgrowth. This chain is Protein IMPACT-A (impact-A), found in Xenopus tropicalis (Western clawed frog).